The chain runs to 390 residues: Pre-mycofactocin synthase (390 aa).

The 383-residue stretch at 1 to 383 (MADEWFETVA…RSDDILIPAD (383 aa)) folds into the FMN hydroxy acid dehydrogenase domain. FMN is bound by residues S108, Q128, T156, and K254. H278 acts as the Proton acceptor in catalysis. Residues 309-313 (DGGIR) and 332-333 (GR) contribute to the FMN site.

Belongs to the FMN-dependent alpha-hydroxy acid dehydrogenase family. Requires FMN as cofactor.

The catalysed reaction is 3-amino-5-[(4-hydroxyphenyl)methyl]-4,4-dimethyl-2-pyrrolidin-2-one + O2 + H2O = pre-mycofactocin + H2O2 + NH4(+). Functionally, involved in the biosynthesis of the enzyme cofactor mycofactocin (MFT). Catalyzes the oxidative deamination of AHDP (3-amino-5-[(4-hydroxyphenyl)methyl]-4,4-dimethyl-2-pyrrolidin-2-one), forming an alpha-keto amide moiety on the resulting molecule, which is called pre-mycofactocin (PMFT). This reaction occurs via a 5-[(4-hydroxyphenyl)methyl]-3-imino-4,4-dimethylpyrrolidin-2-one intermediate, which converts to PMFT. The alpha-keto amide moiety is the redox-active center for the redox activity of mycofactocin. The chain is Pre-mycofactocin synthase from Mycobacterium ulcerans (strain Agy99).